Consider the following 83-residue polypeptide: MSKGQSLQDPYLNILRKERIPVSIFLVNGIKLQGQIESFDQFVILLRNTVSQMVYKHAISTVVPSRNVRLPVQDPNAPAEEDS.

The region spanning 9 to 68 (DPYLNILRKERIPVSIFLVNGIKLQGQIESFDQFVILLRNTVSQMVYKHAISTVVPSRNV) is the Sm domain.

The protein belongs to the Hfq family. In terms of assembly, homohexamer.

Its function is as follows. RNA chaperone that binds small regulatory RNA (sRNAs) and mRNAs to facilitate mRNA translational regulation in response to envelope stress, environmental stress and changes in metabolite concentrations. Also binds with high specificity to tRNAs. This chain is RNA-binding protein Hfq, found in Chromohalobacter salexigens (strain ATCC BAA-138 / DSM 3043 / CIP 106854 / NCIMB 13768 / 1H11).